The chain runs to 121 residues: Ribosome-binding factor A (121 aa).

The protein belongs to the RbfA family. As to quaternary structure, monomer. Binds 30S ribosomal subunits, but not 50S ribosomal subunits or 70S ribosomes.

Its subcellular location is the cytoplasm. Its function is as follows. One of several proteins that assist in the late maturation steps of the functional core of the 30S ribosomal subunit. Associates with free 30S ribosomal subunits (but not with 30S subunits that are part of 70S ribosomes or polysomes). Required for efficient processing of 16S rRNA. May interact with the 5'-terminal helix region of 16S rRNA. This is Ribosome-binding factor A from Paraburkholderia phytofirmans (strain DSM 17436 / LMG 22146 / PsJN) (Burkholderia phytofirmans).